The following is a 300-amino-acid chain: Ribosomal RNA small subunit methyltransferase H (300 aa).

Residues 46–48 (GGH), D65, F92, D107, and Q114 each bind S-adenosyl-L-methionine.

This sequence belongs to the methyltransferase superfamily. RsmH family.

The protein resides in the cytoplasm. The enzyme catalyses cytidine(1402) in 16S rRNA + S-adenosyl-L-methionine = N(4)-methylcytidine(1402) in 16S rRNA + S-adenosyl-L-homocysteine + H(+). Its function is as follows. Specifically methylates the N4 position of cytidine in position 1402 (C1402) of 16S rRNA. In Prochlorococcus marinus (strain MIT 9301), this protein is Ribosomal RNA small subunit methyltransferase H.